Here is a 360-residue protein sequence, read N- to C-terminus: Phospho-N-acetylmuramoyl-pentapeptide-transferase (360 aa).

10 consecutive transmembrane segments (helical) span residues 26–46, 73–93, 98–118, 136–156, 168–188, 199–219, 235–255, 263–283, 288–308, and 338–358; these read TILG…AVIQ, TMGG…WADL, VWVV…DDAL, LQVL…TDPV, WVFP…VGSS, GLAI…AYAS, GVGE…GFLW, VFMG…VAVA, IVLF…MIQV, and VIVR…AMLK.

The protein belongs to the glycosyltransferase 4 family. MraY subfamily. It depends on Mg(2+) as a cofactor.

The protein resides in the cell inner membrane. The catalysed reaction is UDP-N-acetyl-alpha-D-muramoyl-L-alanyl-gamma-D-glutamyl-meso-2,6-diaminopimeloyl-D-alanyl-D-alanine + di-trans,octa-cis-undecaprenyl phosphate = di-trans,octa-cis-undecaprenyl diphospho-N-acetyl-alpha-D-muramoyl-L-alanyl-D-glutamyl-meso-2,6-diaminopimeloyl-D-alanyl-D-alanine + UMP. Its pathway is cell wall biogenesis; peptidoglycan biosynthesis. In terms of biological role, catalyzes the initial step of the lipid cycle reactions in the biosynthesis of the cell wall peptidoglycan: transfers peptidoglycan precursor phospho-MurNAc-pentapeptide from UDP-MurNAc-pentapeptide onto the lipid carrier undecaprenyl phosphate, yielding undecaprenyl-pyrophosphoryl-MurNAc-pentapeptide, known as lipid I. The polypeptide is Phospho-N-acetylmuramoyl-pentapeptide-transferase (Halorhodospira halophila (strain DSM 244 / SL1) (Ectothiorhodospira halophila (strain DSM 244 / SL1))).